A 213-amino-acid polypeptide reads, in one-letter code: Protein GrpE (213 aa).

The tract at residues 1 to 61 (MEQGEKQVME…AEKAPTAEEL (61 aa)) is disordered. The span at 13-35 (TYDEPEREQPIEEEAAPQPEEES) shows a compositional bias: acidic residues.

Belongs to the GrpE family. As to quaternary structure, homodimer.

The protein localises to the cytoplasm. Functionally, participates actively in the response to hyperosmotic and heat shock by preventing the aggregation of stress-denatured proteins, in association with DnaK and GrpE. It is the nucleotide exchange factor for DnaK and may function as a thermosensor. Unfolded proteins bind initially to DnaJ; upon interaction with the DnaJ-bound protein, DnaK hydrolyzes its bound ATP, resulting in the formation of a stable complex. GrpE releases ADP from DnaK; ATP binding to DnaK triggers the release of the substrate protein, thus completing the reaction cycle. Several rounds of ATP-dependent interactions between DnaJ, DnaK and GrpE are required for fully efficient folding. The polypeptide is Protein GrpE (Geobacillus kaustophilus (strain HTA426)).